The primary structure comprises 191 residues: Adenylate kinase (191 aa).

ATP is bound at residue Gly-12–Thr-17. The NMP stretch occupies residues Ser-33–Val-62. Residues Thr-34, Arg-39, Asn-60 to Val-62, Gly-87 to Arg-90, and Gln-94 each bind AMP. The segment at Gly-129–Asp-135 is LID. Arg-130 contacts ATP. Residues Arg-132 and Arg-144 each contribute to the AMP site. Arg-172 contacts ATP.

It belongs to the adenylate kinase family. In terms of assembly, monomer.

The protein resides in the cytoplasm. It carries out the reaction AMP + ATP = 2 ADP. It functions in the pathway purine metabolism; AMP biosynthesis via salvage pathway; AMP from ADP: step 1/1. Its function is as follows. Catalyzes the reversible transfer of the terminal phosphate group between ATP and AMP. Plays an important role in cellular energy homeostasis and in adenine nucleotide metabolism. This chain is Adenylate kinase, found in Campylobacter fetus subsp. fetus (strain 82-40).